Here is an 817-residue protein sequence, read N- to C-terminus: LPS-assembly protein LptD (817 aa).

Positions Met-1–Ala-45 are cleaved as a signal peptide.

It belongs to the LptD family. As to quaternary structure, component of the lipopolysaccharide transport and assembly complex. Interacts with LptE and LptA.

It is found in the cell outer membrane. Functionally, together with LptE, is involved in the assembly of lipopolysaccharide (LPS) at the surface of the outer membrane. In Acidovorax sp. (strain JS42), this protein is LPS-assembly protein LptD.